The chain runs to 312 residues: Methionyl-tRNA formyltransferase (312 aa).

111 to 114 lines the (6S)-5,6,7,8-tetrahydrofolate pocket; it reads SLLP.

It belongs to the Fmt family.

The enzyme catalyses L-methionyl-tRNA(fMet) + (6R)-10-formyltetrahydrofolate = N-formyl-L-methionyl-tRNA(fMet) + (6S)-5,6,7,8-tetrahydrofolate + H(+). Functionally, attaches a formyl group to the free amino group of methionyl-tRNA(fMet). The formyl group appears to play a dual role in the initiator identity of N-formylmethionyl-tRNA by promoting its recognition by IF2 and preventing the misappropriation of this tRNA by the elongation apparatus. This Myxococcus xanthus (strain DK1622) protein is Methionyl-tRNA formyltransferase.